The primary structure comprises 543 residues: Chaperonin GroEL (543 aa).

Residues 30–33 (TLGP), K51, 87–91 (DGTTT), G415, 480–482 (NAL), and D496 contribute to the ATP site.

This sequence belongs to the chaperonin (HSP60) family. As to quaternary structure, forms a cylinder of 14 subunits composed of two heptameric rings stacked back-to-back. Interacts with the co-chaperonin GroES.

The protein resides in the cytoplasm. It catalyses the reaction ATP + H2O + a folded polypeptide = ADP + phosphate + an unfolded polypeptide.. Its function is as follows. Together with its co-chaperonin GroES, plays an essential role in assisting protein folding. The GroEL-GroES system forms a nano-cage that allows encapsulation of the non-native substrate proteins and provides a physical environment optimized to promote and accelerate protein folding. This chain is Chaperonin GroEL, found in Gemmatimonas aurantiaca (strain DSM 14586 / JCM 11422 / NBRC 100505 / T-27).